The chain runs to 59 residues: Large ribosomal subunit protein uL30 (59 aa).

It belongs to the universal ribosomal protein uL30 family. As to quaternary structure, part of the 50S ribosomal subunit.

The chain is Large ribosomal subunit protein uL30 from Solidesulfovibrio magneticus (strain ATCC 700980 / DSM 13731 / RS-1) (Desulfovibrio magneticus).